The chain runs to 84 residues: uncharacterized protein (84 aa).

The interval 1 to 21 is disordered; the sequence is MYYRRQGEPQEMYGNGNNSVS. A helical membrane pass occupies residues 49–69; that stretch reads YIIYAIVAAILLLLFWLLYKK.

It localises to the membrane. This is an uncharacterized protein from Invertebrate iridescent virus 6 (IIV-6).